The sequence spans 290 residues: Ribosomal RNA small subunit methyltransferase A (290 aa).

6 residues coordinate S-adenosyl-L-methionine: histidine 37, valine 39, glycine 64, glutamate 85, aspartate 115, and asparagine 132.

It belongs to the class I-like SAM-binding methyltransferase superfamily. rRNA adenine N(6)-methyltransferase family. RsmA subfamily.

The protein localises to the cytoplasm. It carries out the reaction adenosine(1518)/adenosine(1519) in 16S rRNA + 4 S-adenosyl-L-methionine = N(6)-dimethyladenosine(1518)/N(6)-dimethyladenosine(1519) in 16S rRNA + 4 S-adenosyl-L-homocysteine + 4 H(+). In terms of biological role, specifically dimethylates two adjacent adenosines (A1518 and A1519) in the loop of a conserved hairpin near the 3'-end of 16S rRNA in the 30S particle. May play a critical role in biogenesis of 30S subunits. The polypeptide is Ribosomal RNA small subunit methyltransferase A (Acidothermus cellulolyticus (strain ATCC 43068 / DSM 8971 / 11B)).